We begin with the raw amino-acid sequence, 147 residues long: 3-dehydroquinate dehydratase (147 aa).

Residue Tyr-24 is the Proton acceptor of the active site. Substrate-binding residues include Asn-74, His-80, and Asp-87. Residue His-100 is the Proton donor of the active site. Substrate-binding positions include 101–102 (LS) and Arg-111.

It belongs to the type-II 3-dehydroquinase family. In terms of assembly, homododecamer.

The enzyme catalyses 3-dehydroquinate = 3-dehydroshikimate + H2O. It functions in the pathway metabolic intermediate biosynthesis; chorismate biosynthesis; chorismate from D-erythrose 4-phosphate and phosphoenolpyruvate: step 3/7. Functionally, catalyzes a trans-dehydration via an enolate intermediate. This Azorhizobium caulinodans (strain ATCC 43989 / DSM 5975 / JCM 20966 / LMG 6465 / NBRC 14845 / NCIMB 13405 / ORS 571) protein is 3-dehydroquinate dehydratase.